A 130-amino-acid polypeptide reads, in one-letter code: Small ribosomal subunit protein uS11c (130 aa).

Belongs to the universal ribosomal protein uS11 family. As to quaternary structure, part of the 30S ribosomal subunit.

Its subcellular location is the plastid. The protein localises to the chloroplast. In Guillardia theta (Cryptophyte), this protein is Small ribosomal subunit protein uS11c.